A 77-amino-acid polypeptide reads, in one-letter code: Large ribosomal subunit protein uL24 (77 aa).

Belongs to the universal ribosomal protein uL24 family. In terms of assembly, part of the 50S ribosomal subunit.

Functionally, one of two assembly initiator proteins, it binds directly to the 5'-end of the 23S rRNA, where it nucleates assembly of the 50S subunit. In terms of biological role, one of the proteins that surrounds the polypeptide exit tunnel on the outside of the subunit. The protein is Large ribosomal subunit protein uL24 of Campylobacter fetus subsp. fetus (strain 82-40).